We begin with the raw amino-acid sequence, 119 residues long: uncharacterized protein (119 aa).

Residues 67–119 are disordered; it reads LGLKEVQKKSNEGLNEVQGVADINKQKRPANSQDSSSVEGDIQNFLEKVTGKN. A compositionally biased stretch (polar residues) spans 95–104; it reads PANSQDSSSV.

This is an uncharacterized protein from Anabaena variabilis.